A 328-amino-acid chain; its full sequence is Endo-beta-1,4-glucanase B (328 aa).

Residues 1–17 form the signal peptide; sequence MKVNTLLVAVAAGTAMA. The N-linked (GlcNAc...) asparagine glycan is linked to asparagine 95. Glutamate 155 (proton donor) is an active-site residue. Glutamate 262 acts as the Nucleophile in catalysis.

Belongs to the glycosyl hydrolase 5 (cellulase A) family.

It localises to the secreted. It catalyses the reaction Endohydrolysis of (1-&gt;4)-beta-D-glucosidic linkages in cellulose, lichenin and cereal beta-D-glucans.. Its function is as follows. Has endoglucanase activity on substrates containing beta-1,4 glycosidic bonds, like in carboxymethylcellulose (CMC), hydroxyethylcellulose (HEC) and beta-glucan. Involved in the degradation of complex natural cellulosic substrates. The sequence is that of Endo-beta-1,4-glucanase B (eglB) from Emericella nidulans (strain FGSC A4 / ATCC 38163 / CBS 112.46 / NRRL 194 / M139) (Aspergillus nidulans).